An 848-amino-acid polypeptide reads, in one-letter code: DNA mismatch repair protein MutS (848 aa).

Gly-605 to Ser-612 serves as a coordination point for ATP.

The protein belongs to the DNA mismatch repair MutS family.

In terms of biological role, this protein is involved in the repair of mismatches in DNA. It is possible that it carries out the mismatch recognition step. This protein has a weak ATPase activity. The chain is DNA mismatch repair protein MutS from Leptospira borgpetersenii serovar Hardjo-bovis (strain JB197).